We begin with the raw amino-acid sequence, 371 residues long: Flagellar P-ring protein 1 (371 aa).

Positions Met1–Ala19 are cleaved as a signal peptide.

This sequence belongs to the FlgI family. In terms of assembly, the basal body constitutes a major portion of the flagellar organelle and consists of four rings (L,P,S, and M) mounted on a central rod.

The protein localises to the periplasm. It localises to the bacterial flagellum basal body. In terms of biological role, assembles around the rod to form the L-ring and probably protects the motor/basal body from shearing forces during rotation. The polypeptide is Flagellar P-ring protein 1 (Cereibacter sphaeroides (strain ATCC 17023 / DSM 158 / JCM 6121 / CCUG 31486 / LMG 2827 / NBRC 12203 / NCIMB 8253 / ATH 2.4.1.) (Rhodobacter sphaeroides)).